The following is a 382-amino-acid chain: Galactokinase (382 aa).

Position 34–37 (34–37) interacts with substrate; it reads EHTD. 124-130 serves as a coordination point for ATP; that stretch reads GAGLSSS. Mg(2+) is bound by residues Ser130 and Glu162. Asp174 serves as the catalytic Proton acceptor. Tyr223 contacts substrate.

This sequence belongs to the GHMP kinase family. GalK subfamily.

The protein localises to the cytoplasm. The enzyme catalyses alpha-D-galactose + ATP = alpha-D-galactose 1-phosphate + ADP + H(+). It participates in carbohydrate metabolism; galactose metabolism. Catalyzes the transfer of the gamma-phosphate of ATP to D-galactose to form alpha-D-galactose-1-phosphate (Gal-1-P). The sequence is that of Galactokinase from Shigella flexneri.